A 259-amino-acid polypeptide reads, in one-letter code: 12alpha-hydroxysteroid dehydrogenase (259 aa).

Residue Tyr-162 is the Proton acceptor of the active site.

This sequence belongs to the short-chain dehydrogenases/reductases (SDR) family. As to quaternary structure, homotetramer.

The catalysed reaction is cholate + NADP(+) = 3alpha,7alpha-dihydroxy-12-oxo-5beta-cholanate + NADPH + H(+). It carries out the reaction deoxycholate + NADP(+) = 12-dehydrodeoxycholate + NADPH + H(+). Its function is as follows. Catalyzes the oxidation of the 12alpha-hydroxy group of bile acids, like cholate and deoxycholate. Is also able to catalyze the reverse reaction in vitro. Is likely involved in an epimerization pathway of bile acids that converts hydroxy groups from alpha to beta positions via stable oxo-intermediates, which occurs in the human gut. This Clostridium sp. (strain ATCC 29733 / VPI C48-50) protein is 12alpha-hydroxysteroid dehydrogenase.